A 78-amino-acid polypeptide reads, in one-letter code: Large ribosomal subunit protein bL28 (78 aa).

This sequence belongs to the bacterial ribosomal protein bL28 family.

This is Large ribosomal subunit protein bL28 from Acidithiobacillus ferrooxidans (strain ATCC 23270 / DSM 14882 / CIP 104768 / NCIMB 8455) (Ferrobacillus ferrooxidans (strain ATCC 23270)).